The sequence spans 536 residues: 1,4-beta-D-glucan cellobiohydrolase B (536 aa).

The signal sequence occupies residues 1–21; the sequence is MSSFQIYRAALLLSILATANA. Positions 22-458 are catalytic; that stretch reads QQVGTYTTET…SNIKFGPIGS (437 aa). The active-site Nucleophile is Glu-233. The active-site Proton donor is the Glu-238. 2 N-linked (GlcNAc...) asparagine glycosylation sites follow: Asn-351 and Asn-414. Positions 459-500 are ser/Thr-rich linker; the sequence is TYSSGSSSGSGSSSSSSSTTTKATSTTLKTTSTTSSGSSSTS. Residues 464–499 are disordered; the sequence is SSSGSGSSSSSSSTTTKATSTTLKTTSTTSSGSSST. One can recognise a CBM1 domain in the interval 500–536; it reads SAAQAYGQCGGQGWTGPTTCVSGYTCTYENAYYSQCL. Disulfide bonds link Cys-508–Cys-525 and Cys-519–Cys-535.

It belongs to the glycosyl hydrolase 7 (cellulase C) family.

The protein resides in the secreted. The enzyme catalyses Hydrolysis of (1-&gt;4)-beta-D-glucosidic linkages in cellulose and cellotetraose, releasing cellobiose from the non-reducing ends of the chains.. Functionally, the biological conversion of cellulose to glucose generally requires three types of hydrolytic enzymes: (1) Endoglucanases which cut internal beta-1,4-glucosidic bonds; (2) Exocellobiohydrolases that cut the disaccharide cellobiose from the non-reducing end of the cellulose polymer chain; (3) Beta-1,4-glucosidases which hydrolyze the cellobiose and other short cello-oligosaccharides to glucose. The sequence is that of 1,4-beta-D-glucan cellobiohydrolase B (cbhB) from Aspergillus niger.